The following is a 113-amino-acid chain: Large ribosomal subunit protein uL22 (113 aa).

Belongs to the universal ribosomal protein uL22 family. Part of the 50S ribosomal subunit.

Its function is as follows. This protein binds specifically to 23S rRNA; its binding is stimulated by other ribosomal proteins, e.g. L4, L17, and L20. It is important during the early stages of 50S assembly. It makes multiple contacts with different domains of the 23S rRNA in the assembled 50S subunit and ribosome. The globular domain of the protein is located near the polypeptide exit tunnel on the outside of the subunit, while an extended beta-hairpin is found that lines the wall of the exit tunnel in the center of the 70S ribosome. The sequence is that of Large ribosomal subunit protein uL22 from Opitutus terrae (strain DSM 11246 / JCM 15787 / PB90-1).